A 279-amino-acid chain; its full sequence is MALSFSKYHGLGNDFILVDNRQSTEPCLTPDQAQQLCDRHFGIGADGVIFALPGQGGTDYTMRIFNSDGSEPEMCGNGIRCLAKFLADLEGVEEKTYRIHTLAGVITPQLLADGQVKVDMGEPQLLAELIPTTLAPAGEKVVDLPLAVAGQTWAVTCVSMGNPHCLTFVDDVDSLNLTEIGPLFEHHPQFSQRTNTEFIQVLGSDRLKMRVWERGAGITLACGTGACATVVAAVLTGRGDRRCTVELPGGNLEIEWSAQDNRLYMTGPAQRVFSGQAEI.

Substrate is bound by residues asparagine 13 and asparagine 66. Residue cysteine 75 is the Proton donor of the active site. Substrate is bound by residues glycine 76–asparagine 77, asparagine 162, asparagine 195, and glutamate 213–arginine 214. Catalysis depends on cysteine 222, which acts as the Proton acceptor. Glycine 223–threonine 224 contributes to the substrate binding site.

Belongs to the diaminopimelate epimerase family. As to quaternary structure, homodimer.

It is found in the cytoplasm. It catalyses the reaction (2S,6S)-2,6-diaminopimelate = meso-2,6-diaminopimelate. It participates in amino-acid biosynthesis; L-lysine biosynthesis via DAP pathway; DL-2,6-diaminopimelate from LL-2,6-diaminopimelate: step 1/1. Catalyzes the stereoinversion of LL-2,6-diaminopimelate (L,L-DAP) to meso-diaminopimelate (meso-DAP), a precursor of L-lysine and an essential component of the bacterial peptidoglycan. This chain is Diaminopimelate epimerase, found in Synechocystis sp. (strain ATCC 27184 / PCC 6803 / Kazusa).